The sequence spans 195 residues: Probable septum site-determining protein MinC (195 aa).

The protein belongs to the MinC family. Interacts with MinD and FtsZ.

Cell division inhibitor that blocks the formation of polar Z ring septums. Rapidly oscillates between the poles of the cell to destabilize FtsZ filaments that have formed before they mature into polar Z rings. Prevents FtsZ polymerization. The polypeptide is Probable septum site-determining protein MinC (Helicobacter pylori (strain P12)).